A 217-amino-acid polypeptide reads, in one-letter code: Magnetosome protein MamA (217 aa).

TPR repeat units lie at residues 12-44, 46-79, 80-113, 114-147, 148-181, and 182-215; these read VTLY…NDDI, QVYY…DAFD, VEVA…APDN, IKVA…NPVN, FNVR…RPNE, and GKVH…DERS. Residues 41–112 are N-terminal domain; it reads NDDIRQVYYR…LERSIADAPD (72 aa). A C-terminal domain region spans residues 113–217; sequence NIKVATVLGL…ANELDERSAV (105 aa).

The protein belongs to the magnetosome MamA family. In terms of assembly, forms round, 20 nm diameter complexes with a central cavity. Probably binds MamC. Interacts with full-length Mms6.

The protein localises to the magnetosome membrane. Its function is as follows. Probably forms a large homooligomer on which other magnetosome subunits assemble. Required for formation of functional magnetosomes from pre-existing vesicles. In Magnetospirillum gryphiswaldense (strain DSM 6361 / JCM 21280 / NBRC 15271 / MSR-1), this protein is Magnetosome protein MamA.